We begin with the raw amino-acid sequence, 187 residues long: Elongation factor P (187 aa).

The protein belongs to the elongation factor P family.

The protein resides in the cytoplasm. The protein operates within protein biosynthesis; polypeptide chain elongation. Its function is as follows. Involved in peptide bond synthesis. Stimulates efficient translation and peptide-bond synthesis on native or reconstituted 70S ribosomes in vitro. Probably functions indirectly by altering the affinity of the ribosome for aminoacyl-tRNA, thus increasing their reactivity as acceptors for peptidyl transferase. The protein is Elongation factor P of Nocardioides sp. (strain ATCC BAA-499 / JS614).